Here is a 247-residue protein sequence, read N- to C-terminus: Serine/threonine-protein phosphatase 2A activator (247 aa).

This sequence belongs to the PTPA-type PPIase family.

Its subcellular location is the cytoplasm. It catalyses the reaction [protein]-peptidylproline (omega=180) = [protein]-peptidylproline (omega=0). Its function is as follows. PPIases accelerate the folding of proteins. It catalyzes the cis-trans isomerization of proline imidic peptide bonds in oligopeptides. Acts as a regulatory subunit for PP2A-like phosphatases modulating their activity or substrate specificity, probably by inducing a conformational change in the catalytic subunit, a direct target of the PPIase. Can reactivate inactive phosphatase PP2A-phosphatase methylesterase complexes (PP2Ai) in presence of ATP and Mg(2+) by dissociating the inactive form from the complex. The protein is Serine/threonine-protein phosphatase 2A activator of Encephalitozoon cuniculi (strain GB-M1) (Microsporidian parasite).